Reading from the N-terminus, the 39-residue chain is Photosystem II reaction center protein L (39 aa).

A helical membrane pass occupies residues 18-38; the sequence is SLYLGLLLVFVTGVLFSSYFF.

The protein belongs to the PsbL family. As to quaternary structure, PSII is composed of 1 copy each of membrane proteins PsbA, PsbB, PsbC, PsbD, PsbE, PsbF, PsbH, PsbI, PsbJ, PsbK, PsbL, PsbM, PsbT, PsbX, PsbY, PsbZ, Psb30/Ycf12, at least 3 peripheral proteins of the oxygen-evolving complex and a large number of cofactors. It forms dimeric complexes.

The protein localises to the plastid. It is found in the organellar chromatophore thylakoid membrane. In terms of biological role, one of the components of the core complex of photosystem II (PSII). PSII is a light-driven water:plastoquinone oxidoreductase that uses light energy to abstract electrons from H(2)O, generating O(2) and a proton gradient subsequently used for ATP formation. It consists of a core antenna complex that captures photons, and an electron transfer chain that converts photonic excitation into a charge separation. This subunit is found at the monomer-monomer interface and is required for correct PSII assembly and/or dimerization. This chain is Photosystem II reaction center protein L, found in Paulinella chromatophora.